The primary structure comprises 273 residues: Dermonecrotic toxin LhSicTox-alphaIA2av (273 aa).

Histidine 5 is an active-site residue. Mg(2+) is bound by residues glutamate 25 and aspartate 27. Histidine 41 (nucleophile) is an active-site residue. 2 disulfide bridges follow: cysteine 45/cysteine 51 and cysteine 47/cysteine 190. Residue aspartate 85 coordinates Mg(2+).

It belongs to the arthropod phospholipase D family. Class II subfamily. Mg(2+) serves as cofactor. In terms of tissue distribution, expressed by the venom gland.

Its subcellular location is the secreted. It catalyses the reaction an N-(acyl)-sphingosylphosphocholine = an N-(acyl)-sphingosyl-1,3-cyclic phosphate + choline. The enzyme catalyses an N-(acyl)-sphingosylphosphoethanolamine = an N-(acyl)-sphingosyl-1,3-cyclic phosphate + ethanolamine. The catalysed reaction is a 1-acyl-sn-glycero-3-phosphocholine = a 1-acyl-sn-glycero-2,3-cyclic phosphate + choline. It carries out the reaction a 1-acyl-sn-glycero-3-phosphoethanolamine = a 1-acyl-sn-glycero-2,3-cyclic phosphate + ethanolamine. Dermonecrotic toxins cleave the phosphodiester linkage between the phosphate and headgroup of certain phospholipids (sphingolipid and lysolipid substrates), forming an alcohol (often choline) and a cyclic phosphate. This toxin acts on sphingomyelin (SM). It may also act on ceramide phosphoethanolamine (CPE), lysophosphatidylcholine (LPC) and lysophosphatidylethanolamine (LPE), but not on lysophosphatidylserine (LPS), and lysophosphatidylglycerol (LPG). It acts by transphosphatidylation, releasing exclusively cyclic phosphate products as second products. Induces dermonecrosis, hemolysis, increased vascular permeability, edema, inflammatory response, and platelet aggregation. In Loxosceles hirsuta (Recluse spider), this protein is Dermonecrotic toxin LhSicTox-alphaIA2av.